We begin with the raw amino-acid sequence, 124 residues long: Fluoride-specific ion channel FluC (124 aa).

The next 4 helical transmembrane spans lie at 2–22 (LNIA…RWLI), 35–55 (TGTL…IAWF), 71–91 (TGFC…VALF), and 100–120 (LGTM…AFWL). Na(+) is bound by residues Gly75 and Thr78.

The protein belongs to the fluoride channel Fluc/FEX (TC 1.A.43) family.

The protein localises to the cell inner membrane. The enzyme catalyses fluoride(in) = fluoride(out). With respect to regulation, na(+) is not transported, but it plays an essential structural role and its presence is essential for fluoride channel function. Its function is as follows. Fluoride-specific ion channel. Important for reducing fluoride concentration in the cell, thus reducing its toxicity. The chain is Fluoride-specific ion channel FluC from Proteus mirabilis (strain HI4320).